The primary structure comprises 961 residues: MLAPRGATFLLLHLALQPWLGAGAQATPQVFDLLPSASQRLNPSVLQPILTDPTLNELYVISTFKLQSKSSATIFGLYSSADHSKYFEFTVMGRLNKAILRYLKNDGRIHLVVFNNLQLADGRRHRLLLRLTNLHRGAGSVELFLDCTRVDSIHNLPRAFSGLAQSPEAVELRTFQRKAHDSLEELKLVVRGSLIQVASLQDCFLQQSEPLATTNTGDFNRQFLGQMSQLNQLLGEVKDLLRQQVKETSFLRNTIAECQACGPLSFQSPTPNTLMPVVPAASPTPPVRRCDSNPCFRGVRCTDTRDGFQCGPCPEGYTGNGIVCSDVDECRYHPCYPGVRCVNLAPGFRCDACPVGFTGPMMQGVGISFAKTNKQVCTDIDECRNGACVLNSICINTLGSYRCGPCKPGYIGDQMRGCKMERNCRDPELNPCSVNAQCIEERQGDVTCVCGVGWAGDGYICGKDVDIDSYPDEELPCSARNCKKDNCKYVPNSGQEDADRDGIGDACDDDADGDGILNEQDNCVLTHNVDQRNSDKDIFGDACDNCRNVLNNDQKDTDGDGKGDACDDDMDGDGIKNILDNCQKVPNSDQEDRDGDGVGDACDSCPEVSNPNQSDVDNDLVGDSCDTNQDSDGDGHQDSTDNCPTVINSAQLDTDKDGIGDECDDDDDNDGIPDLVPPGPDNCRLVPNPAQEDSNSDGVGDICEADFDQDQVIDRIDVCPENAEVTLTDFRAYQTVVLDPEGDAQIDPNWVVLNQGMEIVQTMNSDPGLAVGYTAFNGVDFEGTFHVNTQTDDDYAGFIFGYQDSSSFYVVMWKQTEQTYWQATPFRAVAEPGIQLKAVKSKTGPGEHLRNSLWHTGDTSDQVRLLWKDSRNVGWKDKVSYRWFLQHRPQVGYIRVRFYEGSELVADSGVTIDTTMRGGRLGVFCFSQENIIWSNLKYRCNDTIPEDFQEFQTQNFDRLDK.

Positions 1–23 (MLAPRGATFLLLHLALQPWLGAG) are cleaved as a signal peptide. One can recognise a Laminin G-like domain in the interval 24-192 (AQATPQVFDL…LEELKLVVRG (169 aa)). The EGF-like 1 domain maps to 286–325 (PVRRCDSNPCFRGVRCTDTRDGFQCGPCPEGYTGNGIVCS). Intrachain disulfides connect cysteine 290–cysteine 301, cysteine 295–cysteine 310, cysteine 313–cysteine 324, cysteine 330–cysteine 341, cysteine 335–cysteine 350, cysteine 353–cysteine 377, cysteine 383–cysteine 394, cysteine 388–cysteine 403, cysteine 406–cysteine 418, cysteine 424–cysteine 438, cysteine 432–cysteine 448, cysteine 450–cysteine 461, cysteine 477–cysteine 482, cysteine 487–cysteine 507, cysteine 523–cysteine 543, cysteine 546–cysteine 566, cysteine 582–cysteine 602, cysteine 605–cysteine 625, cysteine 643–cysteine 663, cysteine 683–cysteine 703, and cysteine 719–cysteine 940. The region spanning 326-363 (DVDECRYHPCYPGVRCVNLAPGFRCDACPVGFTGPMMQ) is the EGF-like 2; calcium-binding domain. Residues 379 to 419 (DIDECRNGACVLNSICINTLGSYRCGPCKPGYIGDQMRGCK) enclose the EGF-like 3; calcium-binding domain. The EGF-like 4 domain maps to 420–462 (MERNCRDPELNPCSVNAQCIEERQGDVTCVCGVGWAGDGYICG). 8 TSP type-3 repeats span residues 463 to 495 (KDVDIDSYPDEELPCSARNCKKDNCKYVPNSGQ), 496 to 531 (EDADRDGIGDACDDDADGDGILNEQDNCVLTHNVDQ), 532 to 554 (RNSDKDIFGDACDNCRNVLNNDQ), 555 to 590 (KDTDGDGKGDACDDDMDGDGIKNILDNCQKVPNSDQ), 591 to 613 (EDRDGDGVGDACDSCPEVSNPNQ), 614 to 651 (SDVDNDLVGDSCDTNQDSDGDGHQDSTDNCPTVINSAQ), 652 to 691 (LDTDKDGIGDECDDDDDNDGIPDLVPPGPDNCRLVPNPAQ), and 692 to 727 (EDSNSDGVGDICEADFDQDQVIDRIDVCPENAEVTL). The short motif at 562–564 (KGD) is the Cell attachment site element. The tract at residues 581-671 (NCQKVPNSDQ…ECDDDDDNDG (91 aa)) is disordered. Residue asparagine 612 is glycosylated (N-linked (GlcNAc...) asparagine). A compositionally biased stretch (polar residues) spans 640–652 (TDNCPTVINSAQL). Positions 660-671 (GDECDDDDDNDG) are enriched in acidic residues. The 215-residue stretch at 731–945 (RAYQTVVLDP…LKYRCNDTIP (215 aa)) folds into the TSP C-terminal domain. Asparagine 941 carries N-linked (GlcNAc...) asparagine glycosylation.

The protein belongs to the thrombospondin family. As to quaternary structure, homopentamer; disulfide-linked. Interacts with PTBP3. Interacts (via EGF-like 3; calcium-binding domain) with ATF6 and facilitates its processing, activation and nuclear translocation. Interacts with NOTCH1.

The protein resides in the endoplasmic reticulum. Its subcellular location is the sarcoplasmic reticulum. It is found in the secreted. It localises to the extracellular space. The protein localises to the extracellular matrix. In terms of biological role, adhesive glycoprotein that mediates cell-to-cell and cell-to-matrix interactions and is involved in various processes including cellular proliferation, migration, adhesion and attachment, inflammatory response to CNS injury, regulation of vascular inflammation and adaptive responses of the heart to pressure overload and in myocardial function and remodeling. Binds to structural extracellular matrix (ECM) proteins and modulates the ECM in response to tissue damage, contributing to cardioprotective and adaptive ECM remodeling. Plays a role in ER stress response, via its interaction with the activating transcription factor 6 alpha (ATF6) which produces adaptive ER stress response factors and protects myocardium from pressure overload. May contribute to spinal presynaptic hypersensitivity and neuropathic pain states after peripheral nerve injury. May play a role in regulating protective astrogenesis from the subventricular zone (SVZ) niche after injury in a NOTCH1-dependent manner. The chain is Thrombospondin-4 (THBS4) from Bos taurus (Bovine).